Reading from the N-terminus, the 96-residue chain is uncharacterized protein (96 aa).

This is an uncharacterized protein from Escherichia coli (strain K12).